Reading from the N-terminus, the 104-residue chain is MAAKIRRDDEVIVLTGKDKGKRGKVKNVLSSGKVIVEGINLVKKHQKPVPALNQPGGIVEKEAAIQVSNIAIFNAATGKADRVGFRFEDGKKVRFFKSNSETIK.

Belongs to the universal ribosomal protein uL24 family. Part of the 50S ribosomal subunit.

Its function is as follows. One of two assembly initiator proteins, it binds directly to the 5'-end of the 23S rRNA, where it nucleates assembly of the 50S subunit. In terms of biological role, one of the proteins that surrounds the polypeptide exit tunnel on the outside of the subunit. This Citrobacter koseri (strain ATCC BAA-895 / CDC 4225-83 / SGSC4696) protein is Large ribosomal subunit protein uL24.